The primary structure comprises 437 residues: MQLPWWWELGDPCAWTGQGRGTRRMSPATTGTFLLTVYTIFSKVHSDRNVYPSAGVLFVHVLEREYFKGEFPPYPKPGEISNDPITFNTNLMGYPDRPGWLRYIQRTPYSDGVLYGSPTAENVGKPTVIEITAYNRRTFETARHNLIINIMSAEDFPLPYQAEFFIKNMNVEEMLASEVLGDFLGAVKNVWQPERLNAINITSALDRGGRVPLPINDMKEGVYVMVGADVPFSSCLREVENPQNQLRCSQEMEPVITCDKKFRTQFYIDWCKISLVDKTKQVSTYQEVIRGEGILPDGGEYKPPSDSLKSRDYYTDFLVTLAVPSAVALVLFLILAYIMCCRREGVEKRNMQTPDIQLVHHSAIQKSTKELRDMSKNREIAWPLSTLPVFHPVTGEIIPPLHTDNYESTNMPLMQTQQNLPHQTQIPQQQTTGKWYS.

At 1–317 (MQLPWWWELG…LKSRDYYTDF (317 aa)) the chain is on the extracellular side. Asparagine 200 carries N-linked (GlcNAc...) asparagine glycosylation. Residues 318–338 (LVTLAVPSAVALVLFLILAYI) traverse the membrane as a helical segment. Residues 339-437 (MCCRREGVEK…QQQTTGKWYS (99 aa)) lie on the Cytoplasmic side of the membrane. The interval 418–437 (QNLPHQTQIPQQQTTGKWYS) is disordered.

This sequence belongs to the sarcoglycan alpha/epsilon family. In terms of processing, N-glycosylated. Ubiquitinated, leading to its degradation by the proteasome.

Its subcellular location is the cell membrane. It localises to the sarcolemma. The protein localises to the cytoplasm. It is found in the cytoskeleton. The protein resides in the cell projection. Its subcellular location is the dendrite. It localises to the golgi apparatus. Component of the sarcoglycan complex, a subcomplex of the dystrophin-glycoprotein complex which forms a link between the F-actin cytoskeleton and the extracellular matrix. This chain is Epsilon-sarcoglycan (SGCE), found in Bos taurus (Bovine).